Reading from the N-terminus, the 245-residue chain is 1-(5-phosphoribosyl)-5-[(5-phosphoribosylamino)methylideneamino] imidazole-4-carboxamide isomerase (245 aa).

The active-site Proton acceptor is the Asp8. Asp130 acts as the Proton donor in catalysis.

The protein belongs to the HisA/HisF family.

The protein localises to the cytoplasm. The catalysed reaction is 1-(5-phospho-beta-D-ribosyl)-5-[(5-phospho-beta-D-ribosylamino)methylideneamino]imidazole-4-carboxamide = 5-[(5-phospho-1-deoxy-D-ribulos-1-ylimino)methylamino]-1-(5-phospho-beta-D-ribosyl)imidazole-4-carboxamide. The protein operates within amino-acid biosynthesis; L-histidine biosynthesis; L-histidine from 5-phospho-alpha-D-ribose 1-diphosphate: step 4/9. The polypeptide is 1-(5-phosphoribosyl)-5-[(5-phosphoribosylamino)methylideneamino] imidazole-4-carboxamide isomerase (Marinobacter nauticus (strain ATCC 700491 / DSM 11845 / VT8) (Marinobacter aquaeolei)).